A 241-amino-acid polypeptide reads, in one-letter code: Methylosome subunit pICln (241 aa).

The interval 88–112 (EDKEAHMADQEEEESEDDDDDEEPI) is disordered. Positions 97–112 (QEEEESEDDDDDEEPI) are enriched in acidic residues.

This sequence belongs to the pICln (TC 1.A.47) family. As to quaternary structure, component of the methylosome, a 20S complex containing at least clns1a/picln, prmt5/skb1 and wdr77/mep50; may mediate snrpd1 and snrpd3 methylation. Forms a 6S pICln-Sm complex composed of clns1a/picln, snrpd1, snrpd2, snrpe, snrpf and snrpg; ring-like structure where clns1a/pICln mimics additional Sm proteins and which is unable to assemble into the core snRNP.

Its subcellular location is the cytoplasm. It localises to the cytosol. The protein resides in the nucleus. The protein localises to the cytoskeleton. Its function is as follows. Involved in both the assembly of spliceosomal snRNPs and the methylation of Sm proteins. Chaperone that regulates the assembly of spliceosomal U1, U2, U4 and U5 small nuclear ribonucleoproteins (snRNPs), the building blocks of the spliceosome, and thereby plays an important role in the splicing of cellular pre-mRNAs. Most spliceosomal snRNPs contain a common set of Sm proteins SNRPB, SNRPD1, SNRPD2, SNRPD3, SNRPE, SNRPF and SNRPG that assemble in a heptameric protein ring on the Sm site of the small nuclear RNA to form the core snRNP (Sm core). In the cytosol, the Sm proteins SNRPD1, SNRPD2, SNRPE, SNRPF and SNRPG are trapped in an inactive 6S pICln-Sm complex by the chaperone CLNS1A that controls the assembly of the core snRNP. Dissociation by the SMN complex of CLNS1A from the trapped Sm proteins and their transfer to an SMN-Sm complex triggers the assembly of core snRNPs and their transport to the nucleus. In Xenopus laevis (African clawed frog), this protein is Methylosome subunit pICln (clns1a).